The following is a 368-amino-acid chain: Solute carrier family 35 member G1 (368 aa).

The next 10 helical transmembrane spans lie at 72–92 (GLGL…SLFV), 100–120 (AVEI…PCLI), 134–154 (LFLF…YYAF), 161–181 (DATV…WIFL), 190–210 (AFFT…PFIF), 225–245 (IKGT…LVIL), 256–276 (LSIW…LFVI), 289–309 (LFLI…TKAV), 316–336 (LVAI…IAFF), and 340–360 (PTWW…GATI). 2 EamA domains span residues 83–205 (FLFS…LIVR) and 236–360 (VLAA…GATI).

It belongs to the TMEM20 family. As to quaternary structure, interacts with STIM1; stimulated by depletion of intracellular calcium. Interacts with ORAI1. Interacts with the plasma membrane calcium-transporting ATPases ATP2B1 and ATP2B4. Interacts with ATP1A1, ATP2A2, KPNB1 and XPO1.

The protein resides in the cell membrane. Its subcellular location is the endoplasmic reticulum membrane. Its function is as follows. May play a role in intracellular calcium sensing and homeostasis. May act as a negative regulator of plasma membrane calcium-transporting ATPases preventing calcium efflux from the cell. This chain is Solute carrier family 35 member G1 (Slc35g1), found in Mus musculus (Mouse).